Reading from the N-terminus, the 1494-residue chain is DNA-directed RNA polymerase subunit beta' (1494 aa).

Residues Cys-67, Cys-69, Cys-82, and Cys-85 each contribute to the Zn(2+) site. Positions 499, 501, and 503 each coordinate Mg(2+). Residues Cys-868, Cys-944, Cys-951, and Cys-954 each coordinate Zn(2+).

Belongs to the RNA polymerase beta' chain family. In terms of assembly, the RNAP catalytic core consists of 2 alpha, 1 beta, 1 beta' and 1 omega subunit. When a sigma factor is associated with the core the holoenzyme is formed, which can initiate transcription. Requires Mg(2+) as cofactor. Zn(2+) serves as cofactor.

It catalyses the reaction RNA(n) + a ribonucleoside 5'-triphosphate = RNA(n+1) + diphosphate. In terms of biological role, DNA-dependent RNA polymerase catalyzes the transcription of DNA into RNA using the four ribonucleoside triphosphates as substrates. The sequence is that of DNA-directed RNA polymerase subunit beta' from Chlorobaculum parvum (strain DSM 263 / NCIMB 8327) (Chlorobium vibrioforme subsp. thiosulfatophilum).